The primary structure comprises 536 residues: Chaperonin GroEL (536 aa).

ATP contacts are provided by residues 30 to 33, 86 to 90, glycine 414, and aspartate 494; these read TLGP and DGTTT.

It belongs to the chaperonin (HSP60) family. In terms of assembly, forms a cylinder of 14 subunits composed of two heptameric rings stacked back-to-back. Interacts with the co-chaperonin GroES.

It is found in the cytoplasm. The enzyme catalyses ATP + H2O + a folded polypeptide = ADP + phosphate + an unfolded polypeptide.. In terms of biological role, together with its co-chaperonin GroES, plays an essential role in assisting protein folding. The GroEL-GroES system forms a nano-cage that allows encapsulation of the non-native substrate proteins and provides a physical environment optimized to promote and accelerate protein folding. In Methanosarcina barkeri (strain Fusaro / DSM 804), this protein is Chaperonin GroEL.